The following is a 1701-amino-acid chain: DDB1- and CUL4-associated factor homolog 1 (1701 aa).

A compositionally biased stretch (polar residues) spans 224-245; sequence HAEQSTSNGTSIPSIKITSVDG. Disordered stretches follow at residues 224–269, 883–906, and 932–961; these read HAEQ…RRTE, DRPA…GNNF, and RPSN…TPTL. Residues 851–883 form the LisH domain; sequence NQAELLQLIHDHLLKSKLDSVAAMLKSEAKLPD. Polar residues predominate over residues 888–906; that stretch reads RSINTPILNKPLPSSGNNF. WD repeat units follow at residues 1086–1125, 1128–1169, 1171–1210, and 1215–1252; these read DHDE…DEGH, CHGS…QRVH, YRED…DTYL, and GLQY…HVFD. Short sequence motifs (DWD box) lie at residues 1237-1245 and 1275-1282; these read LLWDVRKKN and EVYDIRTF. Disordered regions lie at residues 1384–1559, 1566–1585, and 1641–1701; these read IGRL…DINL, EARV…PVDP, and LVRG…DDEA. Acidic residues-rich tracts occupy residues 1390-1423 and 1451-1461; these read NEDE…DEEI and DDNDTLDDLDF. Basic residues predominate over residues 1468 to 1479; sequence IIRRQAQRRRQR. 2 stretches are compositionally biased toward acidic residues: residues 1494–1512 and 1520–1543; these read EGSD…DPDF and DLVD…DDDS. The span at 1567-1581 shows a compositional bias: basic and acidic residues; the sequence is ARVVENEGNNERPAR. Positions 1667–1678 are enriched in acidic residues; the sequence is DTDEYQSEEEEI.

Belongs to the VPRBP/DCAF1 family. Component of the cul4-rbx1-ddb1-dcaf1 E3 ubiquitin-protein ligase complex.

It localises to the nucleus. It functions in the pathway protein modification; protein ubiquitination. Functionally, component of the cul4-rbx1-ddb1-dcaf1 E3 ubiquitin-protein ligase complex, dcaf1 may function as the substrate recognition module within this complex. The protein is DDB1- and CUL4-associated factor homolog 1 (dcaf-1) of Caenorhabditis elegans.